The chain runs to 64 residues: Disintegrin (64 aa).

A Disintegrin domain is found at 1–64 (NSVHPCCDPV…SDCPRNRYNH (64 aa)). 4 cysteine pairs are disulfide-bonded: Cys6–Cys29, Cys20–Cys26, Cys25–Cys50, and Cys38–Cys57. The Cell attachment site; atypical (MLD) motif lies at 42 to 44 (MLD).

This sequence belongs to the disintegrin family. Dimeric disintegrin subfamily. Heterodimer; disulfide-linked. Expressed by the venom gland.

Its subcellular location is the secreted. In terms of biological role, inhibits adhesion of cells expressing alpha-4/beta-1 (ITGA4/ITGB1) and alpha-4/beta-7 (ITGA4/ITGB7) integrins to the natural ligands vascular cell adhesion molecule 1 (VCAM-1) and mucosal addressin cell adhesion molecule 1 (MADCAM-1). The chain is Disintegrin from Echis carinatus (Saw-scaled viper).